A 127-amino-acid polypeptide reads, in one-letter code: MYRTFMTSKLHKATVTEANLHYVGSITIDEDLLDAAGMMANEKVQIVNNHNGARLETYIIPGERKSGVICLNGAAARLVQPGDEVIIIAYGMLSEGEAKTHTPKVVVLNKENQIEQMIGQEPARTIL.

S25 (schiff-base intermediate with substrate; via pyruvic acid) is an active-site residue. The residue at position 25 (S25) is a Pyruvic acid (Ser). Substrate is bound at residue T57. Y58 serves as the catalytic Proton donor. A substrate-binding site is contributed by 73 to 75 (GAA).

This sequence belongs to the PanD family. As to quaternary structure, heterooctamer of four alpha and four beta subunits. Pyruvate is required as a cofactor. In terms of processing, is synthesized initially as an inactive proenzyme, which is activated by self-cleavage at a specific serine bond to produce a beta-subunit with a hydroxyl group at its C-terminus and an alpha-subunit with a pyruvoyl group at its N-terminus.

Its subcellular location is the cytoplasm. It catalyses the reaction L-aspartate + H(+) = beta-alanine + CO2. Its pathway is cofactor biosynthesis; (R)-pantothenate biosynthesis; beta-alanine from L-aspartate: step 1/1. Catalyzes the pyruvoyl-dependent decarboxylation of aspartate to produce beta-alanine. The chain is Aspartate 1-decarboxylase from Bacillus pumilus (strain SAFR-032).